A 312-amino-acid chain; its full sequence is Olfactory receptor 867 (312 aa).

Topologically, residues 1-6 (MILNCN) are extracellular. A helical membrane pass occupies residues 7-30 (PFSGLFLSMYLVTVLGNLLIILAV). Topologically, residues 31 to 38 (SSNSHLHN) are cytoplasmic. A helical transmembrane segment spans residues 39 to 60 (LMYFFLSNLSFVDICFISTTIP). The Extracellular portion of the chain corresponds to 61–81 (KMLVNIHSQTKDISYIECLSQ). A disulfide bridge links Cys78 with Cys160. The helical transmembrane segment at 82 to 101 (VYFLTTFGGMDNFLLTLMAC) threads the bilayer. The Cytoplasmic segment spans residues 102 to 120 (DRYVAICHPLNYTVIMNLQ). The helical transmembrane segment at 121-139 (LCALLILMFWLIMFCVSLI) threads the bilayer. At 140-177 (HVLLMNELNFSRGTEIPHFFCELAQVLKVANSDTHINN) the chain is on the extracellular side. N-linked (GlcNAc...) asparagine glycosylation is present at Asn148. Residues 178–200 (VFMYVVTSLLGLIPMTGILMSYS) form a helical membrane-spanning segment. Residues 201 to 217 (QIASSLLKMSSSVSKYK) are Cytoplasmic-facing. Residues 218-241 (AFSTCGSHLCVVSLFYGSATIVYF) traverse the membrane as a helical segment. Topologically, residues 242–253 (CSSVLHSTHKKM) are extracellular. Residues 254 to 273 (IASLMYTVISPMLNPFIYSL) form a helical membrane-spanning segment. Residues 274–312 (RNKDVKGALGKLFIRVASCPLWSKDFRPKFILKPERQSL) are Cytoplasmic-facing.

The protein belongs to the G-protein coupled receptor 1 family. In terms of tissue distribution, epithelium of the tongue; including the taste buds.

The protein resides in the cell membrane. Its function is as follows. Possible olfactory or taste receptor. In Rattus norvegicus (Rat), this protein is Olfactory receptor 867 (Olr867).